Consider the following 568-residue polypeptide: Cyclin-dependent kinase-like 2 (568 aa).

One can recognise a Protein kinase domain in the interval 4–289 (YENLGLVGEG…CADLLRHDFF (286 aa)). Residues 10 to 18 (VGEGSYGMV) and Lys-33 each bind ATP. Residues 45–51 (KKIAMRE) carry the [NKR]KIAxRE motif. Asp-126 (proton acceptor) is an active-site residue. 2 disordered regions span residues 309 to 333 (DARNNSLPKKSQNRKKEKDDALGEE) and 545 to 568 (SHQGAGSPLSDDSEADLPRMEHQH). Residues 322–333 (RKKEKDDALGEE) show a composition bias toward basic and acidic residues.

Belongs to the protein kinase superfamily. CMGC Ser/Thr protein kinase family. CDC2/CDKX subfamily. In terms of tissue distribution, expressed in testis, kidney, lung and brain.

It is found in the cytoplasm. The protein localises to the nucleus. The enzyme catalyses L-seryl-[protein] + ATP = O-phospho-L-seryl-[protein] + ADP + H(+). The catalysed reaction is L-threonyl-[protein] + ATP = O-phospho-L-threonyl-[protein] + ADP + H(+). This chain is Cyclin-dependent kinase-like 2, found in Mus musculus (Mouse).